The chain runs to 149 residues: Calmodulin-3 (149 aa).

N-acetylalanine is present on alanine 2. 4 consecutive EF-hand domains span residues 8 to 43 (DQIA…LGQN), 44 to 79 (PTEA…KMKD), 81 to 116 (DSEE…LGEK), and 117 to 149 (LTDE…MMAK). The Ca(2+) site is built by aspartate 21, aspartate 23, aspartate 25, cysteine 27, glutamate 32, aspartate 57, aspartate 59, asparagine 61, threonine 63, glutamate 68, aspartate 94, aspartate 96, asparagine 98, and glutamate 105. An N6,N6,N6-trimethyllysine modification is found at lysine 116. Aspartate 130, aspartate 132, aspartate 134, glutamine 136, and glutamate 141 together coordinate Ca(2+).

Belongs to the calmodulin family.

Its function is as follows. Calmodulin mediates the control of a large number of enzymes, ion channels and other proteins by Ca(2+). Among the enzymes to be stimulated by the calmodulin-Ca(2+) complex are a number of protein kinases and phosphatases. This chain is Calmodulin-3 (CAM3), found in Oryza sativa subsp. indica (Rice).